A 310-amino-acid chain; its full sequence is Thioredoxin reductase (310 aa).

FAD is bound at residue 34–41 (NGMQPGGQ). A disulfide bridge connects residues Cys-135 and Cys-138. Residue 281-290 (DVQDKIYRQA) coordinates FAD.

The protein belongs to the class-II pyridine nucleotide-disulfide oxidoreductase family. Homodimer. It depends on FAD as a cofactor.

Its subcellular location is the cytoplasm. The enzyme catalyses [thioredoxin]-dithiol + NADP(+) = [thioredoxin]-disulfide + NADPH + H(+). The chain is Thioredoxin reductase (trxB) from Rickettsia conorii (strain ATCC VR-613 / Malish 7).